We begin with the raw amino-acid sequence, 361 residues long: 3-dehydroquinate synthase (361 aa).

Residues Gly106 to Asp110, Thr130 to Thr131, Lys143, and Lys152 contribute to the NAD(+) site. 3 residues coordinate Zn(2+): Glu185, His248, and His265.

The protein belongs to the sugar phosphate cyclases superfamily. Dehydroquinate synthase family. NAD(+) is required as a cofactor. It depends on Co(2+) as a cofactor. Zn(2+) serves as cofactor.

It localises to the cytoplasm. It carries out the reaction 7-phospho-2-dehydro-3-deoxy-D-arabino-heptonate = 3-dehydroquinate + phosphate. The protein operates within metabolic intermediate biosynthesis; chorismate biosynthesis; chorismate from D-erythrose 4-phosphate and phosphoenolpyruvate: step 2/7. Its function is as follows. Catalyzes the conversion of 3-deoxy-D-arabino-heptulosonate 7-phosphate (DAHP) to dehydroquinate (DHQ). The protein is 3-dehydroquinate synthase of Leptospira interrogans serogroup Icterohaemorrhagiae serovar copenhageni (strain Fiocruz L1-130).